A 725-amino-acid polypeptide reads, in one-letter code: Phosphoribosylformylglycinamidine synthase subunit PurL (725 aa).

Residue His34 is part of the active site. Tyr37 serves as a coordination point for ATP. Mg(2+) is bound at residue Glu93. Substrate is bound by residues 94 to 97 (SHNH) and Arg116. The active-site Proton acceptor is the His95. Asp117 contributes to the Mg(2+) binding site. Residues 220–241 (GASFASEDLSEDAETEDRPAVQ) are disordered. Residue Gln241 participates in substrate binding. Position 269 (Asp269) interacts with Mg(2+). 313–315 (ESQ) contributes to the substrate binding site. Positions 489 and 526 each coordinate ATP. Residue Asn527 coordinates Mg(2+). Position 529 (Ser529) interacts with substrate.

This sequence belongs to the FGAMS family. As to quaternary structure, monomer. Part of the FGAM synthase complex composed of 1 PurL, 1 PurQ and 2 PurS subunits.

It is found in the cytoplasm. The enzyme catalyses N(2)-formyl-N(1)-(5-phospho-beta-D-ribosyl)glycinamide + L-glutamine + ATP + H2O = 2-formamido-N(1)-(5-O-phospho-beta-D-ribosyl)acetamidine + L-glutamate + ADP + phosphate + H(+). Its pathway is purine metabolism; IMP biosynthesis via de novo pathway; 5-amino-1-(5-phospho-D-ribosyl)imidazole from N(2)-formyl-N(1)-(5-phospho-D-ribosyl)glycinamide: step 1/2. Functionally, part of the phosphoribosylformylglycinamidine synthase complex involved in the purines biosynthetic pathway. Catalyzes the ATP-dependent conversion of formylglycinamide ribonucleotide (FGAR) and glutamine to yield formylglycinamidine ribonucleotide (FGAM) and glutamate. The FGAM synthase complex is composed of three subunits. PurQ produces an ammonia molecule by converting glutamine to glutamate. PurL transfers the ammonia molecule to FGAR to form FGAM in an ATP-dependent manner. PurS interacts with PurQ and PurL and is thought to assist in the transfer of the ammonia molecule from PurQ to PurL. The protein is Phosphoribosylformylglycinamidine synthase subunit PurL of Haloquadratum walsbyi (strain DSM 16790 / HBSQ001).